The following is a 339-amino-acid chain: Nitrilase (339 aa).

One can recognise a CN hydrolase domain in the interval 7-277; the sequence is YRVAAVQASP…EGITYADIDL (271 aa). The active-site Proton acceptor is Glu-47. The active-site Proton donor is the Lys-128. Catalysis depends on Cys-162, which acts as the Nucleophile.

This sequence belongs to the carbon-nitrogen hydrolase superfamily. Nitrilase family.

The enzyme catalyses a nitrile + 2 H2O = a carboxylate + NH4(+). The sequence is that of Nitrilase (nit) from Bacillus sp. (strain OxB-1).